The sequence spans 281 residues: 4-diphosphocytidyl-2-C-methyl-D-erythritol kinase (281 aa).

The active site involves K15. 98-108 (PTGAGLGGGSS) serves as a coordination point for ATP. Residue D140 is part of the active site.

Belongs to the GHMP kinase family. IspE subfamily.

It carries out the reaction 4-CDP-2-C-methyl-D-erythritol + ATP = 4-CDP-2-C-methyl-D-erythritol 2-phosphate + ADP + H(+). It participates in isoprenoid biosynthesis; isopentenyl diphosphate biosynthesis via DXP pathway; isopentenyl diphosphate from 1-deoxy-D-xylulose 5-phosphate: step 3/6. Functionally, catalyzes the phosphorylation of the position 2 hydroxy group of 4-diphosphocytidyl-2C-methyl-D-erythritol. The chain is 4-diphosphocytidyl-2-C-methyl-D-erythritol kinase from Neisseria meningitidis serogroup A / serotype 4A (strain DSM 15465 / Z2491).